Reading from the N-terminus, the 796-residue chain is Striatin-3 (796 aa).

Position 1 is an N-acetylmethionine (Met1). The segment covering 1–13 (MDELAGGGGGGQG) has biased composition (gly residues). Residues 1-60 (MDELAGGGGGGQGMAAPPRPQQGPGGNLSLPPGANGAPGGGGPPAAEAAGPPAGPELSRP) are disordered. The caveolin-binding stretch occupies residues 71–79 (YIQHEWARF). Positions 77-136 (ARFEMERAHWEVERAELQARIAFLQGERKGQENLKKDLVRRIKMLEYALKQERAKYHKLK) form a coiled coil. Position 150 is a phosphothreonine (Thr150). Residues 166–183 (QNSQLTWKQGRQLLRQYL) are calmodulin-binding. Ser202, Ser214, Ser229, Ser257, and Ser334 each carry phosphoserine. Disordered stretches follow at residues 252 to 271 (ENAD…IPEG) and 311 to 335 (EDGE…DLSP). The segment covering 253–264 (NADDSDEEENDM) has biased composition (acidic residues). WD repeat units lie at residues 477–516 (SHFD…PAKK), 530–569 (AHIG…VDPY), 583–622 (AHTD…PCVC), 678–717 (QSSN…MIHS), 720–759 (AHLD…CVQE), and 766–795 (KLDE…AKVF).

This sequence belongs to the WD repeat striatin family. As to quaternary structure, tetramerizes. Part of the core of STRIPAK complexes composed of PP2A catalytic and scaffolding subunits, the striatins (PP2A regulatory subunits), the striatin-associated proteins MOB4, STRIP1 and STRIP2, PDCD10 and members of the STE20 kinases, such as STK24 and STK26. The STRIPAK complex can be extended by adapter proteins such as SLMAP:SIKE1 or CTTNBP2NL. Interacts with CDC42BPB. As to expression, mainly expressed in the brain and muscles but is also detected at low levels in various tissues such as kidney, spleen and lung.

It localises to the cytoplasm. Its subcellular location is the membrane. In terms of biological role, calmodulin-binding scaffolding protein which is the center of the striatin-interacting phosphatase and kinase (STRIPAK) complexes. STRIPAK complexes have critical roles in protein (de)phosphorylation and are regulators of multiple signaling pathways including Hippo, MAPK, nuclear receptor and cytoskeleton remodeling. Different types of STRIPAK complexes are involved in a variety of biological processes such as cell growth, differentiation, apoptosis, metabolism and immune regulation. The sequence is that of Striatin-3 (Strn3) from Mus musculus (Mouse).